The chain runs to 238 residues: MEEEFPTISLLGIDFNLSNILMITVTCVIVLLIAIICTRNLQRRPTGKQNFIEWVMDFVRGIINSNMDWKTGGRFHVLGITLLMFIFVANMLGLPFQIAINDEVWWRSPTADPIVTLTLAIMVLGLTHYYGIKMRGFKHYFVGTYFSPMKFLFPLKLVEEFANTLTLGLRLYGNIFAGEVLLTIIATQLAHMNIFVGVLAIIPALLWQGFSIFIGAIQAYIFTMLTMVYMSHKVSDEH.

4 consecutive transmembrane segments (helical) span residues L17–C37, I80–I100, D112–I132, and I194–I214.

It belongs to the ATPase A chain family. As to quaternary structure, F-type ATPases have 2 components, CF(1) - the catalytic core - and CF(0) - the membrane proton channel. CF(1) has five subunits: alpha(3), beta(3), gamma(1), delta(1), epsilon(1). CF(0) has three main subunits: a(1), b(2) and c(9-12). The alpha and beta chains form an alternating ring which encloses part of the gamma chain. CF(1) is attached to CF(0) by a central stalk formed by the gamma and epsilon chains, while a peripheral stalk is formed by the delta and b chains.

The protein localises to the cell membrane. In terms of biological role, key component of the proton channel; it plays a direct role in the translocation of protons across the membrane. This chain is ATP synthase subunit a, found in Listeria innocua serovar 6a (strain ATCC BAA-680 / CLIP 11262).